A 319-amino-acid chain; its full sequence is Phosphoribosylformylglycinamidine cyclo-ligase (319 aa).

This sequence belongs to the AIR synthase family.

The protein localises to the cytoplasm. It carries out the reaction 2-formamido-N(1)-(5-O-phospho-beta-D-ribosyl)acetamidine + ATP = 5-amino-1-(5-phospho-beta-D-ribosyl)imidazole + ADP + phosphate + H(+). Its pathway is purine metabolism; IMP biosynthesis via de novo pathway; 5-amino-1-(5-phospho-D-ribosyl)imidazole from N(2)-formyl-N(1)-(5-phospho-D-ribosyl)glycinamide: step 2/2. This is Phosphoribosylformylglycinamidine cyclo-ligase from Sulfurisphaera tokodaii (strain DSM 16993 / JCM 10545 / NBRC 100140 / 7) (Sulfolobus tokodaii).